The following is a 266-amino-acid chain: UPF0294 protein YafD (266 aa).

This sequence belongs to the UPF0294 family.

It localises to the cytoplasm. This chain is UPF0294 protein YafD, found in Shigella dysenteriae serotype 1 (strain Sd197).